The primary structure comprises 438 residues: Na(+)/H(+) antiporter NhaA (438 aa).

The next 11 helical transmembrane spans lie at 23–43 (FGGI…NSFL), 62–82 (FFIG…LFFL), 104–124 (SFPV…YFFL), 133–153 (GFGI…MLLG), 162–182 (VFLI…IALF), 185–205 (TNLK…LAVL), 221–241 (VLLW…AVIL), 302–322 (FLAP…NAGV), 337–357 (LGVI…ITFI), 372–392 (WWHI…SMFI), and 410–430 (IAIL…LFAL).

It belongs to the NhaA Na(+)/H(+) (TC 2.A.33) antiporter family.

It localises to the cell inner membrane. The catalysed reaction is Na(+)(in) + 2 H(+)(out) = Na(+)(out) + 2 H(+)(in). Functionally, na(+)/H(+) antiporter that extrudes sodium in exchange for external protons. This is Na(+)/H(+) antiporter NhaA from Helicobacter pylori (strain HPAG1).